A 240-amino-acid polypeptide reads, in one-letter code: Uridylate kinase (240 aa).

Lys-13–Gly-16 lines the ATP pocket. Residue Gly-55 participates in UMP binding. Positions 56 and 60 each coordinate ATP. UMP-binding positions include Asp-76 and Thr-137–Thr-144. Residues Thr-164, Tyr-170, and Asp-173 each contribute to the ATP site.

This sequence belongs to the UMP kinase family. In terms of assembly, homohexamer.

It is found in the cytoplasm. It catalyses the reaction UMP + ATP = UDP + ADP. It functions in the pathway pyrimidine metabolism; CTP biosynthesis via de novo pathway; UDP from UMP (UMPK route): step 1/1. Its activity is regulated as follows. Inhibited by UTP. Functionally, catalyzes the reversible phosphorylation of UMP to UDP. In Helicobacter acinonychis (strain Sheeba), this protein is Uridylate kinase.